The following is a 447-amino-acid chain: Argininosuccinate synthase (447 aa).

Residues 17-25 and Ala-43 contribute to the ATP site; that span reads AFSGGLDTS. Tyr-99 is an L-citrulline binding site. Positions 129 and 131 each coordinate ATP. 3 residues coordinate L-aspartate: Thr-131, Asn-135, and Asp-136. Asn-135 lines the L-citrulline pocket. Asp-136 provides a ligand contact to ATP. L-citrulline contacts are provided by Arg-139 and Ser-192. Asp-194 is an ATP binding site. L-citrulline is bound by residues Thr-201, Glu-203, and Glu-280.

It belongs to the argininosuccinate synthase family. Type 2 subfamily. In terms of assembly, homotetramer.

The protein resides in the cytoplasm. It carries out the reaction L-citrulline + L-aspartate + ATP = 2-(N(omega)-L-arginino)succinate + AMP + diphosphate + H(+). Its pathway is amino-acid biosynthesis; L-arginine biosynthesis; L-arginine from L-ornithine and carbamoyl phosphate: step 2/3. The chain is Argininosuccinate synthase (argG) from Escherichia coli O157:H7.